The following is a 592-amino-acid chain: BTB/POZ domain-containing protein At5g03250 (592 aa).

The 71-residue stretch at 28 to 98 (SDVTIEVGDM…CYGVKIELTA (71 aa)) folds into the BTB domain. An NPH3 domain is found at 217 to 502 (DWWFDDASFL…VQVLFFEQLR (286 aa)). Y443 carries the post-translational modification Phosphotyrosine.

Belongs to the NPH3 family.

Its pathway is protein modification; protein ubiquitination. May act as a substrate-specific adapter of an E3 ubiquitin-protein ligase complex (CUL3-RBX1-BTB) which mediates the ubiquitination and subsequent proteasomal degradation of target proteins. The polypeptide is BTB/POZ domain-containing protein At5g03250 (Arabidopsis thaliana (Mouse-ear cress)).